A 118-amino-acid chain; its full sequence is MRVKRGNVARKRRKKILKLAKGFRGAGSKLFRTANQQVMKALRSAYRDRRRKKRDFRRLWITRINAATRAQGLRYHEFIDGLKKANIQLNRKMLARLAFLDPEAFTQVVEAARQSRAS.

This sequence belongs to the bacterial ribosomal protein bL20 family.

Functionally, binds directly to 23S ribosomal RNA and is necessary for the in vitro assembly process of the 50S ribosomal subunit. It is not involved in the protein synthesizing functions of that subunit. This is Large ribosomal subunit protein bL20 from Synechococcus sp. (strain JA-2-3B'a(2-13)) (Cyanobacteria bacterium Yellowstone B-Prime).